The primary structure comprises 360 residues: Phosphoserine aminotransferase (360 aa).

Position 42 (Arg42) interacts with L-glutamate. Residues 76 to 77 (AS), Trp102, Thr152, Asp172, and Gln195 contribute to the pyridoxal 5'-phosphate site. Lys196 is modified (N6-(pyridoxal phosphate)lysine). A pyridoxal 5'-phosphate-binding site is contributed by 237–238 (NT).

The protein belongs to the class-V pyridoxal-phosphate-dependent aminotransferase family. SerC subfamily. In terms of assembly, homodimer. Pyridoxal 5'-phosphate is required as a cofactor.

Its subcellular location is the cytoplasm. The catalysed reaction is O-phospho-L-serine + 2-oxoglutarate = 3-phosphooxypyruvate + L-glutamate. It carries out the reaction 4-(phosphooxy)-L-threonine + 2-oxoglutarate = (R)-3-hydroxy-2-oxo-4-phosphooxybutanoate + L-glutamate. The protein operates within amino-acid biosynthesis; L-serine biosynthesis; L-serine from 3-phospho-D-glycerate: step 2/3. In terms of biological role, catalyzes the reversible conversion of 3-phosphohydroxypyruvate to phosphoserine and of 3-hydroxy-2-oxo-4-phosphonooxybutanoate to phosphohydroxythreonine. In Bacillus thuringiensis subsp. konkukian (strain 97-27), this protein is Phosphoserine aminotransferase.